The following is a 55-amino-acid chain: Large ribosomal subunit protein bL33 (55 aa).

The protein belongs to the bacterial ribosomal protein bL33 family.

The sequence is that of Large ribosomal subunit protein bL33 from Rhizobium johnstonii (strain DSM 114642 / LMG 32736 / 3841) (Rhizobium leguminosarum bv. viciae).